The primary structure comprises 143 residues: Hemoglobin subunit alpha-1 (143 aa).

S2 carries the post-translational modification N-acetylserine. The 142-residue stretch at 2 to 143 (SLTEKDKAAV…VSLALAERYR (142 aa)) folds into the Globin domain. Position 60 (H60) interacts with O2. H89 is a heme b binding site.

This sequence belongs to the globin family. As to quaternary structure, hb 1 is a heterotetramer of two alpha-1 and two beta chains. Red blood cells.

In terms of biological role, involved in oxygen transport from gills to the various peripheral tissues. This Cottoperca gobio (Frogmouth) protein is Hemoglobin subunit alpha-1 (hba1).